The following is a 283-amino-acid chain: Shikimate dehydrogenase (NADP(+)) (283 aa).

Residues 16-18 (SLS) and threonine 63 each bind shikimate. Lysine 67 serves as the catalytic Proton acceptor. Aspartate 79 lines the NADP(+) pocket. Positions 88 and 103 each coordinate shikimate. NADP(+) is bound by residues 128 to 132 (GAGGA), alanine 223, and glycine 243.

Belongs to the shikimate dehydrogenase family. In terms of assembly, homodimer.

The enzyme catalyses shikimate + NADP(+) = 3-dehydroshikimate + NADPH + H(+). The protein operates within metabolic intermediate biosynthesis; chorismate biosynthesis; chorismate from D-erythrose 4-phosphate and phosphoenolpyruvate: step 4/7. Its function is as follows. Involved in the biosynthesis of the chorismate, which leads to the biosynthesis of aromatic amino acids. Catalyzes the reversible NADPH linked reduction of 3-dehydroshikimate (DHSA) to yield shikimate (SA). The polypeptide is Shikimate dehydrogenase (NADP(+)) (Xanthomonas campestris pv. campestris (strain 8004)).